The chain runs to 306 residues: MKALSIPDVLAEVAVLVRPHFGKGKPADYIPQLATVPGGKFGMAVRMVDGDEHVIGDADEGFSVQSITKVFALGLALNRLGDEIWTRVGKEPSGTPFNHLSLLEAEQGVPRNPFINAGALAVTDVLMDVTRDPAALVRDFGGFLCGERLEIDPAVATSELAHAWQNRAIASLMRAKGTITHDPEAVVAAYCRQCALSMSCRQLARAFLPLAAGGFSPIAQETVFPERLTRRLNALLLTCGIYDSVGSFAYRVGLPAKSGVGGGIVAVVPGKATVAVWSPELDRFGTSVVGTAALEAFSQITNCSVL.

Residues S66, N116, E159, N166, Y190, Y242, and V260 each coordinate substrate.

This sequence belongs to the glutaminase family. As to quaternary structure, homotetramer.

The catalysed reaction is L-glutamine + H2O = L-glutamate + NH4(+). This chain is Glutaminase, found in Caulobacter vibrioides (strain ATCC 19089 / CIP 103742 / CB 15) (Caulobacter crescentus).